We begin with the raw amino-acid sequence, 448 residues long: Inositol polyphosphate 5-phosphatase K (448 aa).

Positions 16–318 (IHVVTWNVAS…SDHKPVSGTF (303 aa)) are catalytic. Residues 318–448 (FDLELKPLVS…DPLGEAQPQI (131 aa)) form a required for interaction with GPR78 and PAK1 region. The tract at residues 321–448 (ELKPLVSAPL…DPLGEAQPQI (128 aa)) is required for ruffle localization.

It belongs to the inositol 1,4,5-trisphosphate 5-phosphatase type II family. Interacts with GPR78; necessary for INPP5K localization at the endoplasmic reticulum. Interacts with PAK1; competes with GPR78. In terms of tissue distribution, ubiquitously expressed with highest levels in skeletal muscle, heart and kidney.

It localises to the endoplasmic reticulum. Its subcellular location is the cytoplasm. It carries out the reaction 1D-myo-inositol 1,4,5-trisphosphate + H2O = 1D-myo-inositol 1,4-bisphosphate + phosphate. The enzyme catalyses 1D-myo-inositol 1,3,4,5-tetrakisphosphate + H2O = 1D-myo-inositol 1,3,4-trisphosphate + phosphate. It catalyses the reaction a 1,2-diacyl-sn-glycero-3-phospho-(1D-myo-inositol-4,5-bisphosphate) + H2O = a 1,2-diacyl-sn-glycero-3-phospho-(1D-myo-inositol 4-phosphate) + phosphate. The catalysed reaction is a 1,2-diacyl-sn-glycero-3-phospho-(1D-myo-inositol-3,4,5-trisphosphate) + H2O = a 1,2-diacyl-sn-glycero-3-phospho-(1D-myo-inositol-3,4-bisphosphate) + phosphate. It carries out the reaction 1,2-dioctanoyl-sn-glycero-3-phospho-(1D-myo-inositol-3,4,5-trisphosphate) + H2O = 1,2-dioctanoyl-sn-glycero-3-phospho-(1D-myo-inositol-3,4-bisphosphate) + phosphate. In terms of biological role, inositol 5-phosphatase which acts on inositol 1,4,5-trisphosphate, inositol 1,3,4,5-tetrakisphosphate, phosphatidylinositol 4,5-bisphosphate and phosphatidylinositol 3,4,5-trisphosphate. Has 6-fold higher affinity for phosphatidylinositol 4,5-bisphosphate than for inositol 1,4,5-trisphosphate. Negatively regulates assembly of the actin cytoskeleton. Controls insulin-dependent glucose uptake among inositol 3,4,5-trisphosphate phosphatases; therefore, is the specific regulator for insulin signaling in skeletal muscle. In Homo sapiens (Human), this protein is Inositol polyphosphate 5-phosphatase K.